The primary structure comprises 702 residues: Polyribonucleotide nucleotidyltransferase (702 aa).

D487 and D493 together coordinate Mg(2+). A KH domain is found at 554 to 613; that stretch reads PKILTMQINPDKIRDVIGPSGKQINKIIEETGVKIDIEQDGTIFISSVNEEMNKKAKKII. An S1 motif domain is found at 623–691; that stretch reads GQVYLGKVKR…KQGRVNLSRK (69 aa).

It belongs to the polyribonucleotide nucleotidyltransferase family. Mg(2+) serves as cofactor.

Its subcellular location is the cytoplasm. It carries out the reaction RNA(n+1) + phosphate = RNA(n) + a ribonucleoside 5'-diphosphate. In terms of biological role, involved in mRNA degradation. Catalyzes the phosphorolysis of single-stranded polyribonucleotides processively in the 3'- to 5'-direction. The polypeptide is Polyribonucleotide nucleotidyltransferase (Anoxybacillus flavithermus (strain DSM 21510 / WK1)).